The primary structure comprises 183 residues: Copper transporter 4 (183 aa).

The segment at 1-21 (MAMPMPMPPPGPGGDAPPAPT) is disordered. The next 2 helical transmembrane spans lie at 56-76 (VGMYFLCLLLVLALAALAEAL) and 115-135 (LAYLVMLAVMSFNAGVLLAAV).

The protein belongs to the copper transporter (Ctr) (TC 1.A.56) family. SLC31A subfamily.

The protein resides in the membrane. Involved in the transport of copper. In Oryza sativa subsp. japonica (Rice), this protein is Copper transporter 4 (COPT4).